The following is a 501-amino-acid chain: Solute carrier family 2, facilitated glucose transporter member 5 (501 aa).

At Met1 the chain carries N-acetylmethionine. Residues 1 to 18 (MEQQDPIKKEGRLTPVLA) are Cytoplasmic-facing. The chain crosses the membrane as a helical span at residues 19-39 (LATLIAAFGSSFQYGYNVAAV). Tyr32 is a binding site for D-fructose. The Extracellular portion of the chain corresponds to 40 to 68 (NSPAELMKAFYNETHYSRFSEYISEFSLT). Asn51 carries N-linked (GlcNAc...) asparagine glycosylation. Residues 69-91 (LLWSISVSMFPFGGFVGSLMVGP) traverse the membrane as a helical segment. Residues 92–98 (LVNRLGR) lie on the Cytoplasmic side of the membrane. Residues 99–119 (KGTLLFNNIFSIVPAILMGTS) form a helical membrane-spanning segment. Residues 120–126 (KTARSYE) lie on the Extracellular side of the membrane. A helical membrane pass occupies residues 127 to 149 (MIILSRLLVGICAGLSSNVVPMY). The Cytoplasmic segment spans residues 150 to 161 (LGELSPKNLRGA). The helical transmembrane segment at 162–182 (LGVVPQLFITVGILVAQIVGL) threads the bilayer. A D-fructose-binding site is contributed by Gln167. Over 183–192 (RSLLATEEGW) the chain is Extracellular. Residues 193-213 (PILLGLTAIPAALQLLLLPFF) traverse the membrane as a helical segment. The Cytoplasmic segment spans residues 214-277 (PESPRYLLIQ…MFRMRSLRWQ (64 aa)). A helical membrane pass occupies residues 278 to 298 (VISIIILMGGQQLSGVNAIYY). Residues Gln288 and 296–298 (IYY) each bind D-fructose. Topologically, residues 299 to 313 (YADQIYLSAGVKDQD) are extracellular. A helical transmembrane segment spans residues 314–334 (VQYVTVGTGAVNVLMTICAVF). Residues 335-342 (VVEYLGRR) are Cytoplasmic-facing. The chain crosses the membrane as a helical span at residues 343 to 363 (ALLLLGFSVCFIACCVLTVAL). At 364–371 (ALQDRVSW) the chain is on the extracellular side. A helical transmembrane segment spans residues 372-394 (MPYISIVCVISYVIGHALGPSPI). Position 387 (His387) interacts with D-fructose. Topologically, residues 395–412 (PALLITEVFLQSSRSAAY) are cytoplasmic. A helical transmembrane segment spans residues 413 to 433 (MVGGTVHWLSNFAVGLVFPFI). 419 to 420 (HW) serves as a coordination point for D-fructose. The Extracellular portion of the chain corresponds to 434–439 (QVGLGA). Residues 440–460 (YSFIIFAVICLLTTIYIFLIV) traverse the membrane as a helical segment. Residues 461–501 (PETKGKTFVEINHIFTKMNKVSDVHPAKDELKDIPLSAVEL) lie on the Cytoplasmic side of the membrane.

It belongs to the major facilitator superfamily. Sugar transporter (TC 2.A.1.1) family. Glucose transporter subfamily.

Its subcellular location is the apical cell membrane. It is found in the cell membrane. The protein resides in the sarcolemma. The catalysed reaction is D-fructose(out) = D-fructose(in). Functions as a fructose transporter that has only low activity with other monosaccharides. Can mediate the uptake of deoxyglucose, but with low efficiency. Essential for fructose uptake in the small intestine. Plays a role in the regulation of salt uptake and blood pressure in response to dietary fructose. Required for the development of high blood pressure in response to high dietary fructose intake. This Equus caballus (Horse) protein is Solute carrier family 2, facilitated glucose transporter member 5.